The chain runs to 199 residues: uncharacterized protein (199 aa).

The first 28 residues, methionine 1–alanine 28, serve as a signal peptide directing secretion.

Its subcellular location is the secreted. This is an uncharacterized protein from Staphylococcus aureus (strain NCTC 8325 / PS 47).